Reading from the N-terminus, the 224-residue chain is 2-C-methyl-D-erythritol 4-phosphate cytidylyltransferase (224 aa).

The protein belongs to the IspD/TarI cytidylyltransferase family. IspD subfamily.

It catalyses the reaction 2-C-methyl-D-erythritol 4-phosphate + CTP + H(+) = 4-CDP-2-C-methyl-D-erythritol + diphosphate. It participates in isoprenoid biosynthesis; isopentenyl diphosphate biosynthesis via DXP pathway; isopentenyl diphosphate from 1-deoxy-D-xylulose 5-phosphate: step 2/6. Its function is as follows. Catalyzes the formation of 4-diphosphocytidyl-2-C-methyl-D-erythritol from CTP and 2-C-methyl-D-erythritol 4-phosphate (MEP). This is 2-C-methyl-D-erythritol 4-phosphate cytidylyltransferase from Caldicellulosiruptor saccharolyticus (strain ATCC 43494 / DSM 8903 / Tp8T 6331).